The primary structure comprises 203 residues: Nucleoside triphosphate pyrophosphatase (203 aa).

D80 functions as the Proton acceptor in the catalytic mechanism.

It belongs to the Maf family. The cofactor is a divalent metal cation.

It is found in the cytoplasm. The catalysed reaction is a ribonucleoside 5'-triphosphate + H2O = a ribonucleoside 5'-phosphate + diphosphate + H(+). It carries out the reaction a 2'-deoxyribonucleoside 5'-triphosphate + H2O = a 2'-deoxyribonucleoside 5'-phosphate + diphosphate + H(+). In terms of biological role, nucleoside triphosphate pyrophosphatase. May have a dual role in cell division arrest and in preventing the incorporation of modified nucleotides into cellular nucleic acids. In Gluconobacter oxydans (strain 621H) (Gluconobacter suboxydans), this protein is Nucleoside triphosphate pyrophosphatase.